Consider the following 424-residue polypeptide: Probable methyltransferase EP424R (424 aa).

The region spanning 103–315 is the Adrift-type SAM-dependent 2'-O-MTase domain; the sequence is QIVTNAWLKM…TYIVGKNRLR (213 aa). The S-adenosyl-L-methionine site is built by Gly-135 and Asp-228. The active-site Proton acceptor is Lys-268.

The protein resides in the virion. In Ornithodoros (relapsing fever ticks), this protein is Probable methyltransferase EP424R.